The following is a 100-amino-acid chain: U12-ctenitoxin-Pn1a (100 aa).

An N-terminal signal peptide occupies residues 1–28; it reads MKYRIFKMKYTLLFLSVIALVHIFAVEA. A propeptide spanning residues 29–41 is cleaved from the precursor; that stretch reads KDEPESDALVPQE. Cystine bridges form between Cys44–Cys58, Cys51–Cys64, Cys57–Cys82, Cys66–Cys80, and Cys90–Cys97.

Belongs to the neurotoxin 09 (Tx3-6) family. Expressed by the venom gland.

The protein resides in the secreted. Its function is as follows. Probable neurotoxin. This chain is U12-ctenitoxin-Pn1a, found in Phoneutria nigriventer (Brazilian armed spider).